We begin with the raw amino-acid sequence, 186 residues long: NADH dehydrogenase [ubiquinone] 1 beta subcomplex subunit 8, mitochondrial (186 aa).

Residues 1 to 28 (MAVARAGVLGVQWLQRASRNVMPLGART) constitute a mitochondrion transit peptide. The helical transmembrane segment at 133–153 (LFGFLAFMIFMCWVGDVYPVY) threads the bilayer.

The protein belongs to the complex I NDUFB8 subunit family. In terms of assembly, complex I is composed of 45 different subunits.

The protein localises to the mitochondrion inner membrane. Accessory subunit of the mitochondrial membrane respiratory chain NADH dehydrogenase (Complex I), that is believed not to be involved in catalysis. Complex I functions in the transfer of electrons from NADH to the respiratory chain. The immediate electron acceptor for the enzyme is believed to be ubiquinone. The protein is NADH dehydrogenase [ubiquinone] 1 beta subcomplex subunit 8, mitochondrial (NDUFB8) of Homo sapiens (Human).